The chain runs to 180 residues: Large ribosomal subunit protein uL16 (180 aa).

The protein belongs to the universal ribosomal protein uL16 family.

This chain is Large ribosomal subunit protein uL16, found in Hyperthermus butylicus (strain DSM 5456 / JCM 9403 / PLM1-5).